Here is a 249-residue protein sequence, read N- to C-terminus: Aspartate/glutamate leucyltransferase (249 aa).

The protein belongs to the R-transferase family. Bpt subfamily.

It localises to the cytoplasm. It catalyses the reaction N-terminal L-glutamyl-[protein] + L-leucyl-tRNA(Leu) = N-terminal L-leucyl-L-glutamyl-[protein] + tRNA(Leu) + H(+). The enzyme catalyses N-terminal L-aspartyl-[protein] + L-leucyl-tRNA(Leu) = N-terminal L-leucyl-L-aspartyl-[protein] + tRNA(Leu) + H(+). Functionally, functions in the N-end rule pathway of protein degradation where it conjugates Leu from its aminoacyl-tRNA to the N-termini of proteins containing an N-terminal aspartate or glutamate. The protein is Aspartate/glutamate leucyltransferase of Brucella canis (strain ATCC 23365 / NCTC 10854 / RM-666).